Here is a 497-residue protein sequence, read N- to C-terminus: NAD(P)H-quinone oxidoreductase chain 4, chloroplastic (497 aa).

14 helical membrane-spanning segments follow: residues valine 5 to leucine 25, tyrosine 36 to phenylalanine 56, leucine 88 to isoleucine 108, threonine 112 to serine 132, isoleucine 135 to leucine 155, phenylalanine 168 to phenylalanine 188, valine 212 to histidine 232, histidine 243 to isoleucine 263, phenylalanine 275 to isoleucine 295, isoleucine 306 to glutamate 326, glycine 331 to glycine 351, leucine 387 to threonine 407, glycine 418 to leucine 438, and leucine 463 to isoleucine 483.

This sequence belongs to the complex I subunit 4 family.

Its subcellular location is the plastid. The protein resides in the chloroplast thylakoid membrane. It carries out the reaction a plastoquinone + NADH + (n+1) H(+)(in) = a plastoquinol + NAD(+) + n H(+)(out). The catalysed reaction is a plastoquinone + NADPH + (n+1) H(+)(in) = a plastoquinol + NADP(+) + n H(+)(out). The protein is NAD(P)H-quinone oxidoreductase chain 4, chloroplastic of Adiantum capillus-veneris (Maidenhair fern).